A 95-amino-acid chain; its full sequence is Large ribosomal subunit protein bL25 (95 aa).

Belongs to the bacterial ribosomal protein bL25 family. Part of the 50S ribosomal subunit; part of the 5S rRNA/L5/L18/L25 subcomplex. Contacts the 5S rRNA. Binds to the 5S rRNA independently of L5 and L18.

Functionally, this is one of the proteins that binds to the 5S RNA in the ribosome where it forms part of the central protuberance. In Shewanella oneidensis (strain ATCC 700550 / JCM 31522 / CIP 106686 / LMG 19005 / NCIMB 14063 / MR-1), this protein is Large ribosomal subunit protein bL25.